A 413-amino-acid polypeptide reads, in one-letter code: Histidine--tRNA ligase (413 aa).

Belongs to the class-II aminoacyl-tRNA synthetase family. In terms of assembly, homodimer.

It localises to the cytoplasm. It catalyses the reaction tRNA(His) + L-histidine + ATP = L-histidyl-tRNA(His) + AMP + diphosphate + H(+). In Neorickettsia sennetsu (strain ATCC VR-367 / Miyayama) (Ehrlichia sennetsu), this protein is Histidine--tRNA ligase.